The sequence spans 165 residues: Small ribosomal subunit protein eS10 (165 aa).

Y12 bears the Phosphotyrosine mark. The disordered stretch occupies residues 92–165 (ATLRRSRPET…FGRGRGQPPQ (74 aa)). Basic and acidic residues predominate over residues 97 to 128 (SRPETGRPRPKGLEGERPARLTRGEADRDTYR). Glycyl lysine isopeptide (Lys-Gly) (interchain with G-Cter in ubiquitin) cross-links involve residues K138 and K139. Residue S146 is modified to Phosphoserine. The residue at position 153 (R153) is an Omega-N-methylarginine. Positions 154 to 165 (GGFGRGRGQPPQ) are enriched in gly residues. R158 and R160 each carry symmetric dimethylarginine.

The protein belongs to the eukaryotic ribosomal protein eS10 family. Component of the small ribosomal subunit. The methylated form interacts with NPM1. Post-translationally, methylated by PRMT5. Methylation is necessary for its interaction with NPS1, its localization in the granular component (GC) region of the nucleolus, for the proper assembly of ribosomes, protein synthesis and optimal cell proliferation. In terms of processing, monoubiquitinated by ZNF598 when a ribosome has stalled during translation of poly(A) sequences, leading to preclude synthesis of a long poly-lysine tail and initiate the ribosome quality control (RQC) pathway to degrade the potentially detrimental aberrant nascent polypeptide. Deubiquitinated by OTUD3 and USP21, antagonizing ZNF598 activity. Deubiquitinated by OTUD1, antagonizing ZNF598 activity and stimulating formation of polysomes: deubiquitination by OTUD1 promotes stability and translation of a subset mRNAs with a high abundance of rare codons can limit the translation rate. Deubiquitinated by USP10.

Its subcellular location is the cytoplasm. The protein resides in the nucleus. The protein localises to the nucleolus. Component of the 40S ribosomal subunit. The ribosome is a large ribonucleoprotein complex responsible for the synthesis of proteins in the cell. This is Small ribosomal subunit protein eS10 (RPS10) from Oryctolagus cuniculus (Rabbit).